Here is a 1145-residue protein sequence, read N- to C-terminus: Protein sumv-2 (1145 aa).

Residues 1 to 13 (MKPGRKSLPKKNR) are compositionally biased toward basic residues. Disordered regions lie at residues 1–310 (MKPG…APPA), 429–464 (QSRT…QKAR), 999–1025 (HSAS…AGSE), 1040–1059 (QIAA…PRTE), and 1073–1145 (ITTG…ISLI). Residues 14–34 (ASNITEKMPTTSTEAQSSSSK) show a composition bias toward polar residues. Basic and acidic residues-rich tracts occupy residues 73-104 (KTTE…EPRK) and 216-225 (VPEKKPKIED). Residues 226-248 (APTTSSPKKSTPTSAPPTRASAR) are compositionally biased toward low complexity. Residues 455–464 (GDEKRQQKAR) show a composition bias toward basic and acidic residues. The span at 999-1013 (HSASSSAAPSPVGAS) shows a compositional bias: low complexity. Positions 1091–1102 (VIERGDFRDHRP) are enriched in basic and acidic residues. Over residues 1121–1136 (QQPPLPSPAPPPPRGP) the composition is skewed to pro residues.

Functionally, influences the activity of genes involved in vulval development. This is Protein sumv-2 from Caenorhabditis elegans.